Consider the following 149-residue polypeptide: Putative eggshell protein (149 aa).

A run of 6 repeats spans residues 1–5 (YGYDK), 6–10 (YGYDK), 11–15 (YGYDK), 16–20 (YGYDK), 21–25 (YGYDK), and 26–30 (YGYEK). The tract at residues 1–64 (YGYDKYGYDK…YGYDKYGDDK (64 aa)) is 13 X 5 AA approximate tandem repeats of Y-G-Y-[DE]-K. One copy of the 7; truncated repeat lies at 31 to 34 (GYDK). 3 consecutive repeat copies span residues 35–39 (YGYDK), 40–44 (YGYEK), and 45–49 (YGYDK). The 11; approximate repeat unit spans residues 50 to 54 (YGNEK). Repeat 12 spans residues 55-59 (YGYDK). The 13; approximate repeat unit spans residues 60–64 (YGDDK). The span at 105-124 (YRKDHDKHDHDEHDHHDDHH) shows a compositional bias: basic and acidic residues. Positions 105–149 (YRKDHDKHDHDEHDHHDDHHDHRHHHHEHDHHHHHEHDHKNGKGY) are disordered. Over residues 125 to 141 (DHRHHHHEHDHHHHHEH) the composition is skewed to basic residues.

This Schistosoma mansoni (Blood fluke) protein is Putative eggshell protein.